Reading from the N-terminus, the 379-residue chain is Glutamate 5-kinase (379 aa).

Lysine 15 is a binding site for ATP. Substrate contacts are provided by serine 56, aspartate 143, and asparagine 155. Residue serine 175–aspartate 176 coordinates ATP. A PUA domain is found at lysine 281–serine 358.

The protein belongs to the glutamate 5-kinase family.

The protein resides in the cytoplasm. The enzyme catalyses L-glutamate + ATP = L-glutamyl 5-phosphate + ADP. It functions in the pathway amino-acid biosynthesis; L-proline biosynthesis; L-glutamate 5-semialdehyde from L-glutamate: step 1/2. In terms of biological role, catalyzes the transfer of a phosphate group to glutamate to form L-glutamate 5-phosphate. This chain is Glutamate 5-kinase, found in Nitrobacter hamburgensis (strain DSM 10229 / NCIMB 13809 / X14).